A 120-amino-acid chain; its full sequence is PYEKIGAELVKEVAKKTDDVAGDGTTTATVLAQALVKEGLRNVAAGANPLGLKRGIEKAVEKVTETLLKGAKEVETKEQIAATAAISAGDQSIGDLIAEAMDKVGNEGVITVEESNTFGL.

An ATP-binding site is contributed by 23–27 (DGTTT).

This sequence belongs to the chaperonin (HSP60) family. As to quaternary structure, forms a cylinder of 14 subunits composed of two heptameric rings stacked back-to-back. Interacts with the co-chaperonin GroES.

It is found in the cytoplasm. The enzyme catalyses ATP + H2O + a folded polypeptide = ADP + phosphate + an unfolded polypeptide.. Together with its co-chaperonin GroES, plays an essential role in assisting protein folding. The GroEL-GroES system forms a nano-cage that allows encapsulation of the non-native substrate proteins and provides a physical environment optimized to promote and accelerate protein folding. This chain is Chaperonin GroEL, found in Mycobacterium kansasii.